A 73-amino-acid chain; its full sequence is uncharacterized protein (73 aa).

In terms of processing, N-glycosylated.

This is an uncharacterized protein from Saccharomyces cerevisiae (strain ATCC 204508 / S288c) (Baker's yeast).